The sequence spans 209 residues: Inorganic pyrophosphatase (209 aa).

Substrate-binding residues include Lys-38, Arg-52, and Tyr-64. Residues Asp-92, Asp-97, and Asp-130 each contribute to the Mg(2+) site. Residue Tyr-167 participates in substrate binding.

This sequence belongs to the PPase family. In terms of assembly, homohexamer. It depends on Mg(2+) as a cofactor.

The protein resides in the cytoplasm. The enzyme catalyses diphosphate + H2O = 2 phosphate + H(+). Its function is as follows. Catalyzes the hydrolysis of inorganic pyrophosphate (PPi) forming two phosphate ions. This Chlamydia trachomatis serovar L2 (strain ATCC VR-902B / DSM 19102 / 434/Bu) protein is Inorganic pyrophosphatase.